The chain runs to 419 residues: Farnesyl pyrophosphate synthase (419 aa).

M1 is subject to N-acetylmethionine. K123, R126, and Q162 together coordinate isopentenyl diphosphate. An N6-(2-hydroxyisobutyryl)lysine; alternate modification is found at K123. K123 carries the N6-acetyllysine; alternate modification. Mg(2+) contacts are provided by D169 and D173. R178 contacts dimethylallyl diphosphate. R179 contacts isopentenyl diphosphate. Dimethylallyl diphosphate contacts are provided by K266, T267, Q306, K323, and K332. K353 carries the N6-acetyllysine modification.

The protein belongs to the FPP/GGPP synthase family. In terms of assembly, homodimer. Interacts with RSAD2. As to quaternary structure, (Microbial infection) Interacts with HTLV-1 protein p13(II). Requires Mg(2+) as cofactor.

The protein localises to the cytoplasm. The catalysed reaction is isopentenyl diphosphate + dimethylallyl diphosphate = (2E)-geranyl diphosphate + diphosphate. It carries out the reaction isopentenyl diphosphate + (2E)-geranyl diphosphate = (2E,6E)-farnesyl diphosphate + diphosphate. Its pathway is isoprenoid biosynthesis; farnesyl diphosphate biosynthesis; farnesyl diphosphate from geranyl diphosphate and isopentenyl diphosphate: step 1/1. It participates in isoprenoid biosynthesis; geranyl diphosphate biosynthesis; geranyl diphosphate from dimethylallyl diphosphate and isopentenyl diphosphate: step 1/1. With respect to regulation, inactivated by interferon-induced RSAD2. This inactivation may result of disruption of lipid rafts at the plasma membrane, and thus have an antiviral effect since many enveloped viruses need lipid rafts to bud efficiently out of the cell. Key enzyme in isoprenoid biosynthesis which catalyzes the formation of farnesyl diphosphate (FPP), a precursor for several classes of essential metabolites including sterols, dolichols, carotenoids, and ubiquinones. FPP also serves as substrate for protein farnesylation and geranylgeranylation. Catalyzes the sequential condensation of isopentenyl pyrophosphate with the allylic pyrophosphates, dimethylallyl pyrophosphate, and then with the resultant geranylpyrophosphate to the ultimate product farnesyl pyrophosphate. The protein is Farnesyl pyrophosphate synthase of Homo sapiens (Human).